The chain runs to 147 residues: Probable WRKY transcription factor 45 (147 aa).

The interval 21-52 (TEFHGVDNSAQPTTSSEEKPRSKKKKKEREAR) is disordered. A DNA-binding region (WRKY) is located at residues 59-124 (SQVDILDDGY…YQGVHTHAVD (66 aa)). 4 residues coordinate Zn(2+): Cys-90, Cys-95, His-119, and His-121.

This sequence belongs to the WRKY group I family.

Its subcellular location is the nucleus. Its function is as follows. Transcription factor. Interacts specifically with the W box (5'-(T)TGAC[CT]-3'), a frequently occurring elicitor-responsive cis-acting element. The sequence is that of Probable WRKY transcription factor 45 (WRKY45) from Arabidopsis thaliana (Mouse-ear cress).